The following is a 344-amino-acid chain: Biotin synthase (344 aa).

Positions 40 to 267 (AEVQVSTLLS…KSMVRLSAGR (228 aa)) constitute a Radical SAM core domain. Positions 55, 59, and 62 each coordinate [4Fe-4S] cluster. Positions 99, 130, 190, and 262 each coordinate [2Fe-2S] cluster.

It belongs to the radical SAM superfamily. Biotin synthase family. As to quaternary structure, homodimer. Requires [4Fe-4S] cluster as cofactor. The cofactor is [2Fe-2S] cluster.

The catalysed reaction is (4R,5S)-dethiobiotin + (sulfur carrier)-SH + 2 reduced [2Fe-2S]-[ferredoxin] + 2 S-adenosyl-L-methionine = (sulfur carrier)-H + biotin + 2 5'-deoxyadenosine + 2 L-methionine + 2 oxidized [2Fe-2S]-[ferredoxin]. Its pathway is cofactor biosynthesis; biotin biosynthesis; biotin from 7,8-diaminononanoate: step 2/2. In terms of biological role, catalyzes the conversion of dethiobiotin (DTB) to biotin by the insertion of a sulfur atom into dethiobiotin via a radical-based mechanism. The polypeptide is Biotin synthase (Xanthomonas campestris pv. campestris (strain 8004)).